Consider the following 405-residue polypeptide: L-rhamnonate dehydratase (405 aa).

His33 and Arg59 together coordinate substrate. Asp226, Glu252, and Glu280 together coordinate Mg(2+). His329 serves as the catalytic Proton acceptor. Glu349 provides a ligand contact to substrate.

This sequence belongs to the mandelate racemase/muconate lactonizing enzyme family. RhamD subfamily. Homooctamer; tetramer of dimers. The cofactor is Mg(2+).

The enzyme catalyses L-rhamnonate = 2-dehydro-3-deoxy-L-rhamnonate + H2O. In terms of biological role, catalyzes the dehydration of L-rhamnonate to 2-keto-3-deoxy-L-rhamnonate (KDR). This Escherichia coli (strain SMS-3-5 / SECEC) protein is L-rhamnonate dehydratase.